The primary structure comprises 429 residues: UDP-N-acetylglucosamine 1-carboxyvinyltransferase (429 aa).

Residue 22-23 (KN) participates in phosphoenolpyruvate binding. Arg-102 is a binding site for UDP-N-acetyl-alpha-D-glucosamine. Cys-126 (proton donor) is an active-site residue. Cys-126 carries the 2-(S-cysteinyl)pyruvic acid O-phosphothioketal modification. UDP-N-acetyl-alpha-D-glucosamine is bound by residues 131-135 (RPVDL), Asp-316, and Ile-338.

It belongs to the EPSP synthase family. MurA subfamily.

The protein localises to the cytoplasm. The catalysed reaction is phosphoenolpyruvate + UDP-N-acetyl-alpha-D-glucosamine = UDP-N-acetyl-3-O-(1-carboxyvinyl)-alpha-D-glucosamine + phosphate. It participates in cell wall biogenesis; peptidoglycan biosynthesis. Functionally, cell wall formation. Adds enolpyruvyl to UDP-N-acetylglucosamine. The chain is UDP-N-acetylglucosamine 1-carboxyvinyltransferase from Rhodopseudomonas palustris (strain BisB18).